A 139-amino-acid chain; its full sequence is Intrinsically disordered protein, expressed in pharynx 15 (139 aa).

Positions 1 to 12 (MNNNQGMYNTQT) are enriched in polar residues. The interval 1–98 (MNNNQGMYNT…GSSTPSPQYS (98 aa)) is disordered. Low complexity-rich tracts occupy residues 13–41 (TQGY…QTTT) and 49–98 (QPQQ…PQYS).

The chain is Intrinsically disordered protein, expressed in pharynx 15 from Caenorhabditis elegans.